The following is a 953-amino-acid chain: Coatomer subunit beta (953 aa).

The residue at position 2 (Thr2) is an N-acetylthreonine. HEAT repeat units follow at residues 96–131 (HEMI…KEAE), 132–168 (LLEP…NFEH), 240–276 (SERA…SAPT), 277–314 (AIKA…HPAH), 316–353 (RVLQ…SRNV), and 396–433 (DMAA…RFDN). Position 494 is an N6-acetyllysine (Lys494).

As to quaternary structure, oligomeric complex that consists of at least the alpha, beta, beta', gamma, delta, epsilon and zeta subunits. Interacts with CAPN8. Interacts with SCYL1 and PRKCE. Interacts with COPG1. Interacts with ARF1 (myristoylated); this interaction is required for binding of COPB1 to Golgi membranes. Interacts (via trunk domain) with ARF1 (via switch I region); the interaction is direct. Interacts with KCNK2 (via N-terminus); this interaction increases the channel-mediated whole cell currents and promotes plasma membrane expression of KCNK2. Interacts with STX17. Interacts with TMEM115. Interacts with TMEM41B. Post-translationally, proteolytically cleaved between Ser-528 and Ser-529 by CAPN8. As to expression, predominantly expressed in the upper one-third of the oxyntic mucosa and in most regions of the pyloric mucosa. Ubiquitously expressed including platelet, liver, heart, spleen, lung and kidney.

The protein resides in the cytoplasm. The protein localises to the golgi apparatus membrane. It is found in the cytoplasmic vesicle. Its subcellular location is the COPI-coated vesicle membrane. It localises to the cell membrane. The protein resides in the endoplasmic reticulum-Golgi intermediate compartment. Its function is as follows. The coatomer is a cytosolic protein complex that binds to dilysine motifs and reversibly associates with Golgi non-clathrin-coated vesicles, which further mediate biosynthetic protein transport from the ER, via the Golgi up to the trans Golgi network. Coatomer complex is required for budding from Golgi membranes, and is essential for the retrograde Golgi-to-ER transport of dilysine-tagged proteins. In mammals, the coatomer can only be recruited by membranes associated to ADP-ribosylation factors (ARFs), which are small GTP-binding proteins; the complex also influences the Golgi structural integrity, as well as the processing, activity, and endocytic recycling of LDL receptors. Involved in the Golgi disassembly and reassembly processes during cell cycle. Involved in autophagy by playing a role in early endosome function. Plays a role in organellar compartmentalization of secretory compartments including endoplasmic reticulum (ER)-Golgi intermediate compartment (ERGIC), Golgi, trans-Golgi network (TGN) and recycling endosomes, and in biosynthetic transport of CAV1. Plays a functional role in facilitating the transport of kappa-type opioid receptor mRNAs into axons and enhances translation of these proteins in cortical neurons. Required for limiting lipid storage in lipid droplets. Involved in lipid homeostasis by regulating the presence of perilipin family members PLIN2 and PLIN3 at the lipid droplet surface and promoting the association of adipocyte triglyceride lipase (PNPLA2) with the lipid droplet surface to mediate lipolysis. This is Coatomer subunit beta (Copb1) from Mus musculus (Mouse).